Consider the following 365-residue polypeptide: Cyclin-D5-2 (365 aa).

It belongs to the cyclin family. Cyclin D subfamily.

This Oryza sativa subsp. japonica (Rice) protein is Cyclin-D5-2 (CYCD5-2).